The following is a 314-amino-acid chain: MSKGKSKYVIDPISVKTACTSEESYIRCVEYGKGKAHYPNLSLLAKAILAGVFVGVCAHASGIAGGHFYYHKLREYVGISMSAFVYGFTFPIAFLCIIATGSDLFTGNTLAVTTALLQRKVSLLQYLRVMSISLFGNYLGAVSFAFFVSHLSGAYEKHTDVTKNHIFQFLNDIAEKKISHTFIQCICLAIGCNIFVCLAVYFVLTIKDGSGMVFSVFFAVYAFAIAGYEHIIANMYTLNLALMVEAKVTWSKVYFHNLLPTLIGNYIAGALVLACPLFYIYRNSYRDYERTRGDGSNCGLRSLSIEMQNGSNGN.

At 1-47 (MSKGKSKYVIDPISVKTACTSEESYIRCVEYGKGKAHYPNLSLLAKA) the chain is on the cytoplasmic side. Residues 48 to 68 (ILAGVFVGVCAHASGIAGGHF) form a helical membrane-spanning segment. Topologically, residues 69-78 (YYHKLREYVG) are extracellular. Residues 79–99 (ISMSAFVYGFTFPIAFLCIIA) traverse the membrane as a helical segment. At 100 to 128 (TGSDLFTGNTLAVTTALLQRKVSLLQYLR) the chain is on the cytoplasmic side. Residues 129-149 (VMSISLFGNYLGAVSFAFFVS) traverse the membrane as a helical segment. The Extracellular portion of the chain corresponds to 150–185 (HLSGAYEKHTDVTKNHIFQFLNDIAEKKISHTFIQC). A helical membrane pass occupies residues 186 to 206 (ICLAIGCNIFVCLAVYFVLTI). Over 207–211 (KDGSG) the chain is Cytoplasmic. Residues 212-232 (MVFSVFFAVYAFAIAGYEHII) traverse the membrane as a helical segment. Topologically, residues 233-257 (ANMYTLNLALMVEAKVTWSKVYFHN) are extracellular. A helical membrane pass occupies residues 258–278 (LLPTLIGNYIAGALVLACPLF). The Cytoplasmic segment spans residues 279–314 (YIYRNSYRDYERTRGDGSNCGLRSLSIEMQNGSNGN).

This sequence belongs to the FNT transporter (TC 1.A.16) family. In terms of assembly, homopentamer.

The protein resides in the cell membrane. It is found in the vacuole membrane. The catalysed reaction is (S)-lactate(in) + H(+)(in) = (S)-lactate(out) + H(+)(out). It carries out the reaction formate(in) + H(+)(in) = formate(out) + H(+)(out). The enzyme catalyses pyruvate(out) + H(+)(out) = pyruvate(in) + H(+)(in). It catalyses the reaction acetate(out) + H(+)(out) = acetate(in) + H(+)(in). Inhibited by the Malaria Box compound MMV007839 and its derivatives BH296 and BH267.meta. Its function is as follows. Monocarboxylate-proton symporter that mediates the efflux of the waste product lactate in the intraerythrocytic parasites; active in acidic-to-neutral pH range. Transports L-lactate. The sequence is that of Formate-nitrite transporter from Plasmodium knowlesi (strain H).